A 690-amino-acid chain; its full sequence is DNA-directed RNA polymerase subunit beta' (690 aa).

Residues Cys-76, Cys-78, Cys-94, and Cys-97 each coordinate Zn(2+). Positions 496, 498, and 500 each coordinate Mg(2+).

It belongs to the RNA polymerase beta' chain family. RpoC1 subfamily. In plastids the minimal PEP RNA polymerase catalytic core is composed of four subunits: alpha, beta, beta', and beta''. When a (nuclear-encoded) sigma factor is associated with the core the holoenzyme is formed, which can initiate transcription. Requires Mg(2+) as cofactor. It depends on Zn(2+) as a cofactor.

It localises to the plastid. It is found in the chloroplast. It carries out the reaction RNA(n) + a ribonucleoside 5'-triphosphate = RNA(n+1) + diphosphate. In terms of biological role, DNA-dependent RNA polymerase catalyzes the transcription of DNA into RNA using the four ribonucleoside triphosphates as substrates. The chain is DNA-directed RNA polymerase subunit beta' from Lemna minor (Common duckweed).